A 133-amino-acid chain; its full sequence is MARPDMGGPKTGGFGGPRSGGFGGGGGGGFGGGGFGGGRGGDRGDRGDRDDRGGDEGGGRRGFGRRKVCRFCADKALKVDYKDQGQMKYFLTERGKIIPRRISGNCAKHQREVATAIKRGRMLAILPYTVGQM.

The disordered stretch occupies residues 1-63 (MARPDMGGPK…GDEGGGRRGF (63 aa)). Residues 9 to 39 (PKTGGFGGPRSGGFGGGGGGGFGGGGFGGGR) are compositionally biased toward gly residues. Positions 40-59 (GGDRGDRGDRDDRGGDEGGG) are enriched in basic and acidic residues.

It belongs to the bacterial ribosomal protein bS18 family. Part of the 30S ribosomal subunit. Forms a tight heterodimer with protein bS6.

Its function is as follows. Binds as a heterodimer with protein bS6 to the central domain of the 16S rRNA, where it helps stabilize the platform of the 30S subunit. The protein is Small ribosomal subunit protein bS18 of Anaeromyxobacter dehalogenans (strain 2CP-1 / ATCC BAA-258).